The chain runs to 340 residues: Hydroxyurea phosphotransferase (340 aa).

Residue D240 is the Proton acceptor of the active site.

It belongs to the aminoglycoside phosphotransferase family.

Functionally, potential phosphotransferase that inactivates hydroxyurea by phosphorylation of the hydroxy group in the hydroxylamine moiety. This is Hydroxyurea phosphotransferase (hur) from Kitasatospora aureofaciens (Streptomyces aureofaciens).